The chain runs to 203 residues: MSRYTGPSWKQSRRYGISLTGSGKEIARRNYVPGQHGPNNRSKLSEYGLQLAEKQKLRFTYGLSERQFRNLYVAATKVKEGTVGYNFMTLLEQRLDNVVYRLGLATTRRQARQFVNHGHILVDGKRVDIPSFRVQPGQVISVREKSMKVPAILEAVEATKGRANFVSFDADKLEGTLVRLPERDEINPEINDALIVEFYNKMM.

Residues 93-156 enclose the S4 RNA-binding domain; it reads QRLDNVVYRL…MKVPAILEAV (64 aa).

Belongs to the universal ribosomal protein uS4 family. As to quaternary structure, part of the 30S ribosomal subunit. Contacts protein S5. The interaction surface between S4 and S5 is involved in control of translational fidelity.

Functionally, one of the primary rRNA binding proteins, it binds directly to 16S rRNA where it nucleates assembly of the body of the 30S subunit. With S5 and S12 plays an important role in translational accuracy. In Lactococcus lactis subsp. cremoris (strain MG1363), this protein is Small ribosomal subunit protein uS4.